Consider the following 473-residue polypeptide: 23S rRNA (uracil(1939)-C(5))-methyltransferase RlmD (473 aa).

The disordered stretch occupies residues 6 to 27 (KPSKGKNKSNVKGRVRGAGSGE). The segment covering 8-20 (SKGKNKSNVKGRV) has biased composition (basic residues). One can recognise a TRAM domain in the interval 42 to 99 (DDINAANEAVTIDGMDWQGQGVARGDTLYFVDGALPGETVEIKALSSNKQIVNAKVTK). 4 residues coordinate [4Fe-4S] cluster: cysteine 112, cysteine 118, cysteine 121, and cysteine 199. The S-adenosyl-L-methionine site is built by glutamine 304, phenylalanine 333, asparagine 338, glutamate 354, aspartate 381, and aspartate 402. The Nucleophile role is filled by cysteine 428.

This sequence belongs to the class I-like SAM-binding methyltransferase superfamily. RNA M5U methyltransferase family. RlmD subfamily.

The enzyme catalyses uridine(1939) in 23S rRNA + S-adenosyl-L-methionine = 5-methyluridine(1939) in 23S rRNA + S-adenosyl-L-homocysteine + H(+). Functionally, catalyzes the formation of 5-methyl-uridine at position 1939 (m5U1939) in 23S rRNA. In Alteromonas naphthalenivorans, this protein is 23S rRNA (uracil(1939)-C(5))-methyltransferase RlmD.